We begin with the raw amino-acid sequence, 46 residues long: Osteocalcin 2 (46 aa).

The Gla domain occupies 1–43 (AVPAGTLSPLQMESLREVCEVNVACDEMADTAGIVAAYTXFYG). Thr-6 carries the post-translational modification Phosphothreonine. Ca(2+)-binding residues include Glu-13, Glu-17, Glu-20, and Asp-26. Glu-13, Glu-17, and Glu-20 each carry 4-carboxyglutamate. Cys-19 and Cys-25 are disulfide-bonded. Glu-27 is subject to 4-carboxyglutamate.

The protein belongs to the osteocalcin/matrix Gla protein family. Post-translationally, gamma-carboxyglutamate residues are formed by vitamin K dependent carboxylation by GGCX. These residues are essential for the binding of calcium.

The protein resides in the secreted. The carboxylated form is one of the main organic components of the bone matrix, which constitutes 1-2% of the total bone protein. The carboxylated form binds strongly to apatite and calcium. In Solea senegalensis (Senegalese sole), this protein is Osteocalcin 2.